A 96-amino-acid chain; its full sequence is UPF0235 protein CKO_04329 (96 aa).

This sequence belongs to the UPF0235 family.

The chain is UPF0235 protein CKO_04329 from Citrobacter koseri (strain ATCC BAA-895 / CDC 4225-83 / SGSC4696).